The following is a 131-amino-acid chain: Large-conductance mechanosensitive channel (131 aa).

The next 3 membrane-spanning stretches (helical) occupy residues 8–28, 30–50, and 67–87; these read FAVR…GAFG, IVSS…LGGI, and GAFL…FLFV.

Belongs to the MscL family. As to quaternary structure, homopentamer.

It localises to the cell membrane. Functionally, channel that opens in response to stretch forces in the membrane lipid bilayer. May participate in the regulation of osmotic pressure changes within the cell. This Anoxybacillus flavithermus (strain DSM 21510 / WK1) protein is Large-conductance mechanosensitive channel.